Reading from the N-terminus, the 160-residue chain is Putative 4-hydroxy-4-methyl-2-oxoglutarate aldolase (160 aa).

Residues 75–78 and R97 each bind substrate; that span reads GDQL. Residue D98 participates in a divalent metal cation binding.

Belongs to the class II aldolase/RraA-like family. In terms of assembly, homotrimer. The cofactor is a divalent metal cation.

It catalyses the reaction 4-hydroxy-4-methyl-2-oxoglutarate = 2 pyruvate. It carries out the reaction oxaloacetate + H(+) = pyruvate + CO2. Its function is as follows. Catalyzes the aldol cleavage of 4-hydroxy-4-methyl-2-oxoglutarate (HMG) into 2 molecules of pyruvate. Also contains a secondary oxaloacetate (OAA) decarboxylase activity due to the common pyruvate enolate transition state formed following C-C bond cleavage in the retro-aldol and decarboxylation reactions. This is Putative 4-hydroxy-4-methyl-2-oxoglutarate aldolase from Vibrio parahaemolyticus serotype O3:K6 (strain RIMD 2210633).